Here is a 567-residue protein sequence, read N- to C-terminus: Urease subunit alpha 1 (567 aa).

One can recognise a Urease domain in the interval 128-567 (GAVDTHVHYI…LPLAQLYHLF (440 aa)). Ni(2+)-binding residues include H133, H135, and K216. K216 bears the N6-carboxylysine mark. H218 serves as a coordination point for substrate. Ni(2+) contacts are provided by H245 and H271. H319 functions as the Proton donor in the catalytic mechanism. D359 lines the Ni(2+) pocket.

The protein belongs to the metallo-dependent hydrolases superfamily. Urease alpha subunit family. Heterotrimer of UreA (gamma), UreB (beta) and UreC (alpha) subunits. Three heterotrimers associate to form the active enzyme. Ni cation serves as cofactor. Carboxylation allows a single lysine to coordinate two nickel ions.

The protein resides in the cytoplasm. It catalyses the reaction urea + 2 H2O + H(+) = hydrogencarbonate + 2 NH4(+). Its pathway is nitrogen metabolism; urea degradation; CO(2) and NH(3) from urea (urease route): step 1/1. This is Urease subunit alpha 1 from Psychrobacter cryohalolentis (strain ATCC BAA-1226 / DSM 17306 / VKM B-2378 / K5).